The chain runs to 570 residues: Nucleoprotein (570 aa).

A binding site for the cap structure m7GTP region spans residues 54–241 (MRKQKRDDGD…IDTKKSSLNI (188 aa)). Residues D390 and E392 each contribute to the Mn(2+) site. Zn(2+) contacts are provided by E400, C507, H510, and C530. D534 is a Mn(2+) binding site.

The protein belongs to the arenaviridae nucleocapsid protein family. In terms of assembly, homomultimerizes to form the nucleocapsid. Binds to viral genomic RNA. Interacts with glycoprotein G2. Interacts with protein Z; this interaction probably directs the encapsidated genome to budding sites. Interacts with protein L; this interaction does not interfere with Z-L interaction. Interacts with host IKBKE (via Protein kinase domain); the interaction inhibits IKBKE kinase activity.

Its subcellular location is the virion. The protein localises to the host cytoplasm. In terms of biological role, encapsidates the genome, protecting it from nucleases. The encapsidated genomic RNA is termed the nucleocapsid (NC). Serves as template for viral transcription and replication. The increased presence of protein N in host cell does not seem to trigger the switch from transcription to replication as observed in other negative strain RNA viruses. Through the interaction with host IKBKE, strongly inhibits the phosphorylation and nuclear translocation of host IRF3, a protein involved in interferon activation pathway, leading to the inhibition of interferon-beta and IRF3-dependent promoters activation. Also encodes a functional 3'-5' exoribonuclease that degrades preferentially dsRNA substrates and thereby participates in the suppression of interferon induction. This chain is Nucleoprotein, found in Homo sapiens (Human).